We begin with the raw amino-acid sequence, 309 residues long: Lipoyl synthase (309 aa).

[4Fe-4S] cluster is bound by residues cysteine 43, cysteine 48, cysteine 54, cysteine 70, cysteine 74, cysteine 77, and serine 283. One can recognise a Radical SAM core domain in the interval 56-272 (AVRKTATFMI…KEIAMQKGFS (217 aa)).

Belongs to the radical SAM superfamily. Lipoyl synthase family. It depends on [4Fe-4S] cluster as a cofactor.

Its subcellular location is the cytoplasm. The enzyme catalyses [[Fe-S] cluster scaffold protein carrying a second [4Fe-4S](2+) cluster] + N(6)-octanoyl-L-lysyl-[protein] + 2 oxidized [2Fe-2S]-[ferredoxin] + 2 S-adenosyl-L-methionine + 4 H(+) = [[Fe-S] cluster scaffold protein] + N(6)-[(R)-dihydrolipoyl]-L-lysyl-[protein] + 4 Fe(3+) + 2 hydrogen sulfide + 2 5'-deoxyadenosine + 2 L-methionine + 2 reduced [2Fe-2S]-[ferredoxin]. The protein operates within protein modification; protein lipoylation via endogenous pathway; protein N(6)-(lipoyl)lysine from octanoyl-[acyl-carrier-protein]. Functionally, catalyzes the radical-mediated insertion of two sulfur atoms into the C-6 and C-8 positions of the octanoyl moiety bound to the lipoyl domains of lipoate-dependent enzymes, thereby converting the octanoylated domains into lipoylated derivatives. The protein is Lipoyl synthase of Shouchella clausii (strain KSM-K16) (Alkalihalobacillus clausii).